The sequence spans 311 residues: Chemotaxis protein CheV3 (311 aa).

In terms of domain architecture, CheW-like spans Glu13 to Leu164. Residues Glu182–Asp308 form the Response regulatory domain. Asp241 bears the 4-aspartylphosphate mark.

Plays a role in chemotaxis signal transduction system in order to colonize the host stomach. May act as a phosphate sink to control the flow of phosphate to CheAY. The protein is Chemotaxis protein CheV3 of Helicobacter pylori (strain ATCC 700392 / 26695) (Campylobacter pylori).